Here is a 470-residue protein sequence, read N- to C-terminus: Methylenetetrahydrofolate--tRNA-(uracil-5-)-methyltransferase TrmFO (470 aa).

10–15 (GAGLAG) lines the FAD pocket.

The protein belongs to the MnmG family. TrmFO subfamily. The cofactor is FAD.

The protein localises to the cytoplasm. The catalysed reaction is uridine(54) in tRNA + (6R)-5,10-methylene-5,6,7,8-tetrahydrofolate + NADH + H(+) = 5-methyluridine(54) in tRNA + (6S)-5,6,7,8-tetrahydrofolate + NAD(+). It catalyses the reaction uridine(54) in tRNA + (6R)-5,10-methylene-5,6,7,8-tetrahydrofolate + NADPH + H(+) = 5-methyluridine(54) in tRNA + (6S)-5,6,7,8-tetrahydrofolate + NADP(+). In terms of biological role, catalyzes the folate-dependent formation of 5-methyl-uridine at position 54 (M-5-U54) in all tRNAs. The sequence is that of Methylenetetrahydrofolate--tRNA-(uracil-5-)-methyltransferase TrmFO from Prochlorococcus marinus (strain MIT 9215).